A 427-amino-acid polypeptide reads, in one-letter code: Serine hydroxymethyltransferase (427 aa).

120 to 122 (GHI) contributes to the (6S)-5,6,7,8-tetrahydrofolate binding site. Lys226 carries the N6-(pyridoxal phosphate)lysine modification.

The protein belongs to the SHMT family. Homodimer. Pyridoxal 5'-phosphate is required as a cofactor.

The protein resides in the cytoplasm. It participates in amino-acid biosynthesis; glycine biosynthesis; glycine from L-serine: step 1/1. In terms of biological role, catalyzes the reversible interconversion of serine and glycine with a modified folate serving as the one-carbon carrier. Also exhibits a pteridine-independent aldolase activity toward beta-hydroxyamino acids, producing glycine and aldehydes, via a retro-aldol mechanism. This chain is Serine hydroxymethyltransferase, found in Pyrococcus horikoshii (strain ATCC 700860 / DSM 12428 / JCM 9974 / NBRC 100139 / OT-3).